The sequence spans 445 residues: Phosphoglucosamine mutase (445 aa).

Ser102 serves as the catalytic Phosphoserine intermediate. Mg(2+) is bound by residues Ser102, Asp240, Asp242, and Asp244. The residue at position 102 (Ser102) is a Phosphoserine.

This sequence belongs to the phosphohexose mutase family. Mg(2+) is required as a cofactor. In terms of processing, activated by phosphorylation.

It carries out the reaction alpha-D-glucosamine 1-phosphate = D-glucosamine 6-phosphate. In terms of biological role, catalyzes the conversion of glucosamine-6-phosphate to glucosamine-1-phosphate. The polypeptide is Phosphoglucosamine mutase (Mycobacterium ulcerans (strain Agy99)).